The following is a 181-amino-acid chain: Photosystem I assembly protein Ycf4 (181 aa).

The next 2 membrane-spanning stretches (helical) occupy residues 19–41 and 61–83; these read YAWC…GSYF and IVMM…SIFT.

It belongs to the Ycf4 family.

The protein resides in the plastid. It localises to the chloroplast thylakoid membrane. Functionally, seems to be required for the assembly of the photosystem I complex. The polypeptide is Photosystem I assembly protein Ycf4 (Guillardia theta (Cryptophyte)).